Here is a 544-residue protein sequence, read N- to C-terminus: Chaperonin GroEL 2 (544 aa).

ATP is bound by residues 29 to 32, 86 to 90, Gly413, 479 to 481, and Asp495; these read TLGP, DGTTT, and NAA.

The protein belongs to the chaperonin (HSP60) family. Forms a cylinder of 14 subunits composed of two heptameric rings stacked back-to-back. Interacts with the co-chaperonin GroES.

The protein resides in the cytoplasm. It catalyses the reaction ATP + H2O + a folded polypeptide = ADP + phosphate + an unfolded polypeptide.. Its function is as follows. Together with its co-chaperonin GroES, plays an essential role in assisting protein folding. The GroEL-GroES system forms a nano-cage that allows encapsulation of the non-native substrate proteins and provides a physical environment optimized to promote and accelerate protein folding. The polypeptide is Chaperonin GroEL 2 (Synechococcus sp. (strain WH7803)).